The chain runs to 298 residues: Nucleotide-binding protein MLBr00563 (298 aa).

21–28 (GLSGAGRG) is an ATP binding site. 72-75 (DVRS) contacts GTP.

It belongs to the RapZ-like family.

Functionally, displays ATPase and GTPase activities. This chain is Nucleotide-binding protein MLBr00563, found in Mycobacterium leprae (strain Br4923).